Consider the following 307-residue polypeptide: Dof zinc finger protein DOF5.4 (307 aa).

Residues 51–105 (LKCPRCNSLNTKFCYYNNYNLSQPRHFCKNCRRYWTKGGVLRNVPVGGGCRKAKR) form a Dof-type zinc finger. Zn(2+) is bound by residues Cys53, Cys56, Cys78, and Cys81. Positions 96 to 147 (VGGGCRKAKRSKTKQVPSSSSADKPTTTQDDHHVEEKSSTGSHSSSESSSLT) are disordered. Residues 109–123 (KQVPSSSSADKPTTT) are compositionally biased toward polar residues. Over residues 124 to 133 (QDDHHVEEKS) the composition is skewed to basic and acidic residues. A compositionally biased stretch (low complexity) spans 134 to 147 (STGSHSSSESSSLT).

It is found in the nucleus. Its function is as follows. Transcription factor that binds specifically to a 5'-AA[AG]G-3' consensus core sequence. Enhances the DNA binding of OBF transcription factors to OCS elements. The sequence is that of Dof zinc finger protein DOF5.4 (DOF5.4) from Arabidopsis thaliana (Mouse-ear cress).